The sequence spans 182 residues: Large ribosomal subunit protein uL6 (182 aa).

This sequence belongs to the universal ribosomal protein uL6 family. As to quaternary structure, part of the 50S ribosomal subunit.

Functionally, this protein binds to the 23S rRNA, and is important in its secondary structure. It is located near the subunit interface in the base of the L7/L12 stalk, and near the tRNA binding site of the peptidyltransferase center. In Nostoc punctiforme (strain ATCC 29133 / PCC 73102), this protein is Large ribosomal subunit protein uL6.